Consider the following 281-residue polypeptide: NADPH-dependent 7-cyano-7-deazaguanine reductase (281 aa).

Val89 to Ser91 lines the substrate pocket. Residue Ser91–Lys92 coordinates NADPH. Cys188 acts as the Thioimide intermediate in catalysis. Asp195 acts as the Proton donor in catalysis. Residue His227 to Glu228 participates in substrate binding. Arg256 to Gly257 serves as a coordination point for NADPH.

Belongs to the GTP cyclohydrolase I family. QueF type 2 subfamily. In terms of assembly, homodimer.

The protein resides in the cytoplasm. The enzyme catalyses 7-aminomethyl-7-carbaguanine + 2 NADP(+) = 7-cyano-7-deazaguanine + 2 NADPH + 3 H(+). It participates in tRNA modification; tRNA-queuosine biosynthesis. Its function is as follows. Catalyzes the NADPH-dependent reduction of 7-cyano-7-deazaguanine (preQ0) to 7-aminomethyl-7-deazaguanine (preQ1). The chain is NADPH-dependent 7-cyano-7-deazaguanine reductase from Azoarcus sp. (strain BH72).